The chain runs to 819 residues: Proteome of basal body protein 15 (819 aa).

Low complexity-rich tracts occupy residues 46-59 (PASS…NPGR) and 572-581 (RQQQQQQQHT). 2 disordered regions span residues 46–72 (PASS…LATG) and 564–590 (ERQR…GGGV). Residues 546–580 (YVVLREAVARVQARMEQQERQRRLLERQQQQQQQH) adopt a coiled-coil conformation.

It is found in the cytoplasm. It localises to the cytoskeleton. Its subcellular location is the microtubule organizing center. The protein resides in the centrosome. The protein localises to the centriole. The sequence is that of Proteome of basal body protein 15 from Chlamydomonas reinhardtii (Chlamydomonas smithii).